We begin with the raw amino-acid sequence, 134 residues long: DNA-binding protein inhibitor ID-2 (134 aa).

Residues Ser14 and Ser25 each carry the phosphoserine modification. The bHLH domain maps to 23–75 (SRSKTPVDDPMSLLYNMNDCYSKLKELVPSIPQNKKVSKMEILQHVIDYILDL). A Nuclear export signal motif is present at residues 106-115 (LNTDISILSL).

As to quaternary structure, interacts with GATA4 and NKX2-5. Interacts with NR0B2. Interacts with CLOCK and BMAL1. Interacts with IFI204. Interacts with NEDD9/HEF1. Interacts with ASB4; this interaction promotes ID2 proteasomal degradation. Ubiquitinated in a ASB4-depedent manner, leading to proteasomal degradation. In terms of processing, phosphorylated in vitro by CDK1, PKA and PKC. Highly expressed in early fetal tissues, including those of the central nervous system.

It is found in the cytoplasm. The protein resides in the nucleus. Its function is as follows. Transcriptional regulator (lacking a basic DNA binding domain) which negatively regulates the basic helix-loop-helix (bHLH) transcription factors by forming heterodimers and inhibiting their DNA binding and transcriptional activity. Implicated in regulating a variety of cellular processes, including cellular growth, senescence, differentiation, apoptosis, angiogenesis, and neoplastic transformation. Inhibits skeletal muscle and cardiac myocyte differentiation. Regulates the circadian clock by repressing the transcriptional activator activity of the CLOCK-BMAL1 heterodimer. Restricts the CLOCK and BMAL1 localization to the cytoplasm. Plays a role in both the input and output pathways of the circadian clock: in the input component, is involved in modulating the magnitude of photic entrainment and in the output component, contributes to the regulation of a variety of liver clock-controlled genes involved in lipid metabolism. In Homo sapiens (Human), this protein is DNA-binding protein inhibitor ID-2 (ID2).